The sequence spans 455 residues: N(6)-adenosine-methyltransferase non-catalytic subunit METTL14 (455 aa).

Residues 21-96 are disordered; that stretch reads QQLGAESPDS…QHQEESGPYE (76 aa). The segment covering 37–51 has biased composition (basic and acidic residues); sequence SKDEQKEIEETRETC. Positions 69-82 are enriched in acidic residues; that stretch reads EGEDPEEDVEEQKE. 2 interaction with METTL3 regions span residues 134 to 135 and 236 to 237; these read RD and SG. A positively charged region required for RNA-binding region spans residues 244 to 253; that stretch reads RMCLRKWGFR. Interaction with METTL3 regions lie at residues 254–257 and 277–286; these read RCED and KAVFQRTKEH. The interval 296 to 297 is positively charged region required for RNA-binding; that stretch reads RR. The segment at 307 to 311 is interaction with METTL3; that stretch reads NVDID. A disordered region spans residues 392–455; it reads ERLRPKSPPP…GGPHRGFPPR (64 aa). Over residues 407 to 421 the composition is skewed to gly residues; that stretch reads RGGGAPRGGRGGPAA. Positions 423 to 441 are enriched in basic and acidic residues; it reads RGDRGRERNRPNFRGDRGG.

Belongs to the MT-A70-like family. Heterodimer; heterodimerizes with mettl3 to form an antiparallel heterodimer that constitutes an active methyltransferase. Component of the WMM complex, a N6-methyltransferase complex composed of a catalytic subcomplex, named MAC, and of an associated subcomplex, named MACOM. The MAC subcomplex is composed of mettl3 and mettl14.

It is found in the nucleus. In terms of biological role, the METTL3-METTL14 heterodimer forms a N6-methyltransferase complex that methylates adenosine residues at the N(6) position of some mRNAs and regulates the circadian clock, differentiation of embryonic stem cells and cortical neurogenesis. In the heterodimer formed with mettl3, mettl14 constitutes the RNA-binding scaffold that recognizes the substrate rather than the catalytic core. N6-methyladenosine (m6A), which takes place at the 5'-[AG]GAC-3' consensus sites of some mRNAs, plays a role in mRNA stability and processing. This Danio rerio (Zebrafish) protein is N(6)-adenosine-methyltransferase non-catalytic subunit METTL14 (mettl14).